Here is a 489-residue protein sequence, read N- to C-terminus: Protein DETOXIFICATION 26 (489 aa).

Transmembrane regions (helical) follow at residues 42 to 62 (IWYI…ILII), 75 to 95 (LAAI…LLLG), 125 to 145 (IILF…TPIL), 157 to 177 (LTGT…FFFP), 190 to 210 (VIAI…WFFV), 217 to 237 (IIGT…ILFL), 271 to 291 (IMLC…GNLV), 300 to 320 (LSIC…FFAG), 342 to 362 (IVSI…IVIF), 385 to 405 (VLLA…GVAV), 416 to 436 (INLG…GWIF), and 442 to 462 (GIWA…LIII).

The protein belongs to the multi antimicrobial extrusion (MATE) (TC 2.A.66.1) family.

The protein localises to the membrane. The protein is Protein DETOXIFICATION 26 of Arabidopsis thaliana (Mouse-ear cress).